The chain runs to 186 residues: Elongation factor P (186 aa).

Belongs to the elongation factor P family.

It is found in the cytoplasm. It functions in the pathway protein biosynthesis; polypeptide chain elongation. Involved in peptide bond synthesis. Stimulates efficient translation and peptide-bond synthesis on native or reconstituted 70S ribosomes in vitro. Probably functions indirectly by altering the affinity of the ribosome for aminoacyl-tRNA, thus increasing their reactivity as acceptors for peptidyl transferase. The chain is Elongation factor P from Streptococcus thermophilus (strain CNRZ 1066).